Here is a 278-residue protein sequence, read N- to C-terminus: Release factor glutamine methyltransferase (278 aa).

S-adenosyl-L-methionine contacts are provided by residues 116–120 (GTGTG), Asp-139, Trp-168, and Asn-182. 182 to 185 (NPPY) is a binding site for substrate.

This sequence belongs to the protein N5-glutamine methyltransferase family. PrmC subfamily.

It carries out the reaction L-glutaminyl-[peptide chain release factor] + S-adenosyl-L-methionine = N(5)-methyl-L-glutaminyl-[peptide chain release factor] + S-adenosyl-L-homocysteine + H(+). Methylates the class 1 translation termination release factors RF1/PrfA and RF2/PrfB on the glutamine residue of the universally conserved GGQ motif. The protein is Release factor glutamine methyltransferase of Cereibacter sphaeroides (strain ATCC 17023 / DSM 158 / JCM 6121 / CCUG 31486 / LMG 2827 / NBRC 12203 / NCIMB 8253 / ATH 2.4.1.) (Rhodobacter sphaeroides).